The following is a 410-amino-acid chain: NADH-quinone oxidoreductase subunit H (410 aa).

9 helical membrane passes run 16–36 (LILA…LAAI), 84–104 (WIYL…FAVI), 124–144 (LPVA…GIVL), 165–185 (VISY…YAGT), 198–218 (VWFI…MVGE), 260–280 (VSAL…PISI), 288–308 (WWPL…FMWL), 320–340 (FMRL…AIVA), and 353–373 (WVTA…LLAW). Residues 384 to 410 (SHSPPAQSSDHGAFPVPPLPVKEPADA) are disordered.

The protein belongs to the complex I subunit 1 family. As to quaternary structure, NDH-1 is composed of 14 different subunits. Subunits NuoA, H, J, K, L, M, N constitute the membrane sector of the complex.

It is found in the cell membrane. The catalysed reaction is a quinone + NADH + 5 H(+)(in) = a quinol + NAD(+) + 4 H(+)(out). In terms of biological role, NDH-1 shuttles electrons from NADH, via FMN and iron-sulfur (Fe-S) centers, to quinones in the respiratory chain. The immediate electron acceptor for the enzyme in this species is believed to be menaquinone. Couples the redox reaction to proton translocation (for every two electrons transferred, four hydrogen ions are translocated across the cytoplasmic membrane), and thus conserves the redox energy in a proton gradient. In Mycolicibacterium gilvum (strain PYR-GCK) (Mycobacterium gilvum (strain PYR-GCK)), this protein is NADH-quinone oxidoreductase subunit H.